A 166-amino-acid polypeptide reads, in one-letter code: Large ribosomal subunit protein uL11z (166 aa).

This sequence belongs to the universal ribosomal protein uL11 family.

Functionally, binds directly to 26S ribosomal RNA. This chain is Large ribosomal subunit protein uL11z (RPL12A), found in Arabidopsis thaliana (Mouse-ear cress).